A 108-amino-acid chain; its full sequence is Small ribosomal subunit protein uS10 (108 aa).

Belongs to the universal ribosomal protein uS10 family. As to quaternary structure, part of the 30S ribosomal subunit.

In terms of biological role, involved in the binding of tRNA to the ribosomes. This Ehrlichia canis (strain Jake) protein is Small ribosomal subunit protein uS10.